A 515-amino-acid polypeptide reads, in one-letter code: 2,3-bisphosphoglycerate-independent phosphoglycerate mutase (515 aa).

Mn(2+) contacts are provided by Asp-14 and Ser-64. Ser-64 functions as the Phosphoserine intermediate in the catalytic mechanism. Substrate contacts are provided by residues His-125, 155–156 (RD), Arg-187, Arg-193, 263–266 (RADR), and Lys-337. 5 residues coordinate Mn(2+): Asp-404, His-408, Asp-445, His-446, and His-464.

It belongs to the BPG-independent phosphoglycerate mutase family. In terms of assembly, monomer. Requires Mn(2+) as cofactor.

It catalyses the reaction (2R)-2-phosphoglycerate = (2R)-3-phosphoglycerate. Its pathway is carbohydrate degradation; glycolysis; pyruvate from D-glyceraldehyde 3-phosphate: step 3/5. In terms of biological role, catalyzes the interconversion of 2-phosphoglycerate and 3-phosphoglycerate. This chain is 2,3-bisphosphoglycerate-independent phosphoglycerate mutase, found in Cronobacter sakazakii (strain ATCC BAA-894) (Enterobacter sakazakii).